We begin with the raw amino-acid sequence, 166 residues long: Transcription antitermination protein NusB (166 aa).

A compositionally biased stretch (basic and acidic residues) spans 1 to 18 (MISDESDRFNPRDPKPAD). Residues 1–28 (MISDESDRFNPRDPKPADAGKPSKSAKR) are disordered.

This sequence belongs to the NusB family.

Its function is as follows. Involved in transcription antitermination. Required for transcription of ribosomal RNA (rRNA) genes. Binds specifically to the boxA antiterminator sequence of the ribosomal RNA (rrn) operons. In Pseudomonas putida (strain W619), this protein is Transcription antitermination protein NusB.